A 169-amino-acid polypeptide reads, in one-letter code: Sorting nexin-24 (169 aa).

Met1 is modified (N-acetylmethionine). Residues 1–125 form the PX domain; sequence MEVYIPSFRH…SFDETESEES (125 aa). Positions 38, 40, 61, and 74 each coordinate a 1,2-diacyl-sn-glycero-3-phospho-(1D-myo-inositol-3-phosphate). A phosphoserine mark is found at Ser113 and Ser116.

It belongs to the sorting nexin family.

The protein resides in the cytoplasmic vesicle membrane. May be involved in several stages of intracellular trafficking. The chain is Sorting nexin-24 (Snx24) from Rattus norvegicus (Rat).